We begin with the raw amino-acid sequence, 283 residues long: Ribosomal RNA small subunit methyltransferase A (283 aa).

6 residues coordinate S-adenosyl-L-methionine: N29, L31, G56, E77, D102, and N123.

Belongs to the class I-like SAM-binding methyltransferase superfamily. rRNA adenine N(6)-methyltransferase family. RsmA subfamily.

The protein resides in the cytoplasm. The catalysed reaction is adenosine(1518)/adenosine(1519) in 16S rRNA + 4 S-adenosyl-L-methionine = N(6)-dimethyladenosine(1518)/N(6)-dimethyladenosine(1519) in 16S rRNA + 4 S-adenosyl-L-homocysteine + 4 H(+). Its function is as follows. Specifically dimethylates two adjacent adenosines (A1518 and A1519) in the loop of a conserved hairpin near the 3'-end of 16S rRNA in the 30S particle. May play a critical role in biogenesis of 30S subunits. In Acidobacterium capsulatum (strain ATCC 51196 / DSM 11244 / BCRC 80197 / JCM 7670 / NBRC 15755 / NCIMB 13165 / 161), this protein is Ribosomal RNA small subunit methyltransferase A.